A 233-amino-acid polypeptide reads, in one-letter code: Ribosomal RNA small subunit methyltransferase G (233 aa).

Residues G91, M96, 142 to 143 (VE), and R157 each bind S-adenosyl-L-methionine.

The protein belongs to the methyltransferase superfamily. RNA methyltransferase RsmG family.

The protein resides in the cytoplasm. The enzyme catalyses guanosine(527) in 16S rRNA + S-adenosyl-L-methionine = N(7)-methylguanosine(527) in 16S rRNA + S-adenosyl-L-homocysteine. Specifically methylates the N7 position of guanine in position 527 of 16S rRNA. The sequence is that of Ribosomal RNA small subunit methyltransferase G from Cupriavidus necator (strain ATCC 17699 / DSM 428 / KCTC 22496 / NCIMB 10442 / H16 / Stanier 337) (Ralstonia eutropha).